A 57-amino-acid chain; its full sequence is uncharacterized protein (57 aa).

This is an uncharacterized protein from Halorubrum sp. PV6 (HRPV-1).